A 778-amino-acid chain; its full sequence is Degenerin deg-1 (778 aa).

Residues 1–82 (MSNHHSKTKK…IARNSFSKLM (82 aa)) lie on the Cytoplasmic side of the membrane. Residues 83–103 (WGLIIFSFLLMFAYQASKLIF) form a helical membrane-spanning segment. At 104 to 711 (KFSAHEKITD…LVNLIADFGG (608 aa)) the chain is on the extracellular side. Over residues 154–165 (NAKTHSKSEGEK) the composition is skewed to basic and acidic residues. Disordered stretches follow at residues 154-180 (NAKT…DASQ) and 201-220 (SNKT…QRSI). 4 N-linked (GlcNAc...) asparagine glycosylation sites follow: Asn202, Asn209, Asn272, and Asn342. Residues 346–369 (TSTTTTTTTTPPPTTTSTTTTTTT) show a composition bias toward low complexity. Residues 346-380 (TSTTTTTTTTPPPTTTSTTTTTTTTPPPTTTARPN) form a disordered region. Residues Asn473, Asn492, and Asn606 are each glycosylated (N-linked (GlcNAc...) asparagine). A helical transmembrane segment spans residues 712 to 732 (HLGLWLGFSVITVMEVCVLLV). Over 733 to 778 (DMISLFFKSRHEEKLLRQSTKRKDVPEDKRQITVGSGRKSDAFVSI) the chain is Cytoplasmic.

This sequence belongs to the amiloride-sensitive sodium channel (TC 1.A.6) family.

It localises to the membrane. Probable sodium channel subunit. Required by a subset of neurons. In Caenorhabditis elegans, this protein is Degenerin deg-1.